We begin with the raw amino-acid sequence, 1185 residues long: DNA-directed RNA polymerase subunit beta' (1185 aa).

Zn(2+) is bound by residues Cys-60, Cys-62, Cys-75, and Cys-78. Asp-449, Asp-451, and Asp-453 together coordinate Mg(2+). 4 residues coordinate Zn(2+): Cys-774, Cys-853, Cys-860, and Cys-863.

The protein belongs to the RNA polymerase beta' chain family. The RNAP catalytic core consists of 2 alpha, 1 beta, 1 beta' and 1 omega subunit. When a sigma factor is associated with the core the holoenzyme is formed, which can initiate transcription. Mg(2+) serves as cofactor. It depends on Zn(2+) as a cofactor.

The enzyme catalyses RNA(n) + a ribonucleoside 5'-triphosphate = RNA(n+1) + diphosphate. DNA-dependent RNA polymerase catalyzes the transcription of DNA into RNA using the four ribonucleoside triphosphates as substrates. The sequence is that of DNA-directed RNA polymerase subunit beta' from Desulforamulus reducens (strain ATCC BAA-1160 / DSM 100696 / MI-1) (Desulfotomaculum reducens).